We begin with the raw amino-acid sequence, 1175 residues long: MSQGFRGPTGVFPHQTQPCLDPSYEHSKWRYLQPRGSESYLRSFQLQQIEFLKGRLPEAPLIGAQTQSLPPFLPGHWPRFPGPPAQGKQPEIWGFPRSVTLRNQGFHIGPPLPPPHSRGPPWRGAEGLCSHFQELSISQNPEQKVLNRLEELGEGKATTAYALARELRTPKKDINRILYSLERKGKLHRGVGKPPLWSLVPLSQACTQPPRAVNSDKEVPRGEPDLDSEDGDPASDLEGPSELLDMAEIKEKICDYLFNVSKSSALNLAKNIGLAKARDVNAVLIDLERQGDVYREGATPPIWYLTDKKRERLQMKRSTHSGPAATPAAVSEATQSTSFPTCHPPQSGGSSSMATSKRVENGQEPVTKYESRHEARPGPVRLRPHAYHNGPSRAGYVASENGPWATDDIPDNLNSIHTAPGEFRAIMEMPSFYSPTLPRCSPYKKLTECQLKNPVSGLLEYAQFTSQTCDFNLIEQSGPSHEPRFKFQVVINGREFPPAEAGSKKVAKQDAAVKAMAILLREAKAKDSGQPEELSNCPMEEDPEKPAESQPPSSSATSLFSGKSPVTTLLECMHKLGNSCEFRLLSKEGPAHDPKFQYCVAVGAQTFPSVSAPSKKVAKQMAAEEAMKALQEEAANSADDQSGGANTDSLDESVAPNKIRRIGELVRYLNTNPVGGLLEYARSHGFAAEFKLIDQSGPPHEPKFVYQAKVGGRWFPAVCAHSKKQGKQDAADAALRVLIGESEKAEQLGFAEVTPVTGASLRRTMLLLSRSPDAHPKTLPLTGSTFHDQIAMLSHRCFNALTNSFQPSLLGRKILAAIIMKRDPEDMGVVVSLGTGNRCVKGDSLSLKGETVNDCHAEIISRRGFIRFLYSELMKYNHHTAKNSIFELARGGEKLQIKKTVSFHLYISTAPCGDGAHFDKSCSDRAVESTESRHYPVFENPKQGKLRTKVENGEGTIPVESSDIVPTWDGIRLGERLRTMSCSDKILRWNVLGLQGALLTHFLQPVYLKSVTLGYLFSQGHLTRAICCRVTRDGNAFEDGLRYPFIVNHPKVGRVSVYDSKRQSGKTKETSVNWCLADGYDLEILDGTRGTVDGPGKELSRVSKKNIFLQFKKLCSFRARRDLLQLSYGEAKKAARDYDLAKNYFKKSLRDMGYGNWISKPQEEKNFYLCPVPND.

An asymmetric dimethylarginine mark is found at Arg30 and Arg42. One can recognise a Z-binding 1 domain in the interval 135-201; it reads LSISQNPEQK…GKPPLWSLVP (67 aa). Residues 135 to 204 form an interaction with Z-DNA region; sequence LSISQNPEQK…PLWSLVPLSQ (70 aa). The tract at residues 207-239 is disordered; that stretch reads TQPPRAVNSDKEVPRGEPDLDSEDGDPASDLEG. A compositionally biased stretch (basic and acidic residues) spans 214-224; sequence NSDKEVPRGEP. Residues 225-235 show a composition bias toward acidic residues; it reads DLDSEDGDPAS. Phosphoserine is present on residues Ser228 and Ser235. The 65-residue stretch at 243–307 folds into the Z-binding 2 domain; sequence LLDMAEIKEK…ATPPIWYLTD (65 aa). Residues 315–384 form a disordered region; sequence MKRSTHSGPA…ARPGPVRLRP (70 aa). Over residues 357–376 the composition is skewed to basic and acidic residues; sequence KRVENGQEPVTKYESRHEAR. A Glycyl lysine isopeptide (Lys-Gly) (interchain with G-Cter in SUMO); alternate cross-link involves residue Lys368. Lys368 is covalently cross-linked (Glycyl lysine isopeptide (Lys-Gly) (interchain with G-Cter in SUMO1); alternate). Lys368 participates in a covalent cross-link: Glycyl lysine isopeptide (Lys-Gly) (interchain with G-Cter in SUMO2); alternate. Ser431 is subject to Phosphoserine. Residues 453–521 enclose the DRBM 1 domain; sequence NPVSGLLEYA…AVKAMAILLR (69 aa). A disordered region spans residues 524–561; the sequence is KAKDSGQPEELSNCPMEEDPEKPAESQPPSSSATSLFS. The span at 550-561 shows a compositional bias: polar residues; it reads QPPSSSATSLFS. Residues Ser564, Ser579, and Ser586 each carry the phosphoserine modification. A DRBM 2 domain is found at 564-632; the sequence is SPVTTLLECM…AEEAMKALQE (69 aa). Positions 632–652 are disordered; the sequence is EEAANSADDQSGGANTDSLDE. A compositionally biased stretch (polar residues) spans 638-648; the sequence is ADDQSGGANTD. An N-terminal extension of DRBM 3 and constituent of a bi-partite nuclear localization signal region spans residues 662-671; that stretch reads IGELVRYLNT. One can recognise a DRBM 3 domain in the interval 672-740; that stretch reads NPVGGLLEYA…ADAALRVLIG (69 aa). Residues 741–747 are C-terminal extension of DRBM 3 and constituent of a bi-partite nuclear localization signal; that stretch reads ESEKAEQ. Thr754 is subject to Phosphothreonine. Residues Ser760, Ser769, and Ser771 each carry the phosphoserine modification. A Glycyl lysine isopeptide (Lys-Gly) (interchain with G-Cter in SUMO2) cross-link involves residue Lys821. The A to I editase domain occupies 832-1167; it reads SLGTGNRCVK…ISKPQEEKNF (336 aa). His856 is a Zn(2+) binding site. The active-site Proton donor is the Glu858. The Zn(2+) site is built by Cys912 and Cys982.

Homodimer. Homodimerization is essential for its catalytic activity. Isoform 5 can form heterodimers with ADARB1/ADAR2. Isoform 1 interacts with ILF2/NF45 and ILF3/NF90. Binding to ILF3/NF90 up-regulates ILF3-mediated gene expression. Isoform 1 and isoform 5 (via DRBM 3 domain) interact with TNPO1. Isoform 5 (via DRBM domains) interacts with XPO5. Isoform 1 and isoform 5 can interact with EIF2AK2/PKR and UPF1. Sumoylation reduces RNA-editing activity. Detected in brain.

It localises to the cytoplasm. The protein localises to the nucleus. It catalyses the reaction adenosine in double-stranded RNA + H2O + H(+) = inosine in double-stranded RNA + NH4(+). Functionally, catalyzes the hydrolytic deamination of adenosine to inosine in double-stranded RNA (dsRNA) referred to as A-to-I RNA editing. This may affect gene expression and function in a number of ways that include mRNA translation by changing codons and hence the amino acid sequence of proteins; pre-mRNA splicing by altering splice site recognition sequences; RNA stability by changing sequences involved in nuclease recognition; genetic stability in the case of RNA virus genomes by changing sequences during viral RNA replication; and RNA structure-dependent activities such as microRNA production or targeting or protein-RNA interactions. Can edit both viral and cellular RNAs and can edit RNAs at multiple sites (hyper-editing) or at specific sites (site-specific editing). Its cellular RNA substrates include: bladder cancer-associated protein (BLCAP), neurotransmitter receptors for glutamate (GRIA2) and serotonin (HTR2C) and GABA receptor (GABRA3). Site-specific RNA editing of transcripts encoding these proteins results in amino acid substitutions which consequently alters their functional activities. Exhibits low-level editing at the GRIA2 Q/R site, but edits efficiently at the R/G site and HOTSPOT1. Does not affect polyomavirus replication but provides protection against virus-induced cytopathic effects. Essential for embryonic development and cell survival and plays a critical role in the maintenance of hematopoietic stem cells. This is Double-stranded RNA-specific adenosine deaminase (Adar) from Rattus norvegicus (Rat).